We begin with the raw amino-acid sequence, 344 residues long: Ferrochelatase (344 aa).

2 residues coordinate Fe cation: His-211 and Glu-292.

It belongs to the ferrochelatase family.

It is found in the cytoplasm. The catalysed reaction is heme b + 2 H(+) = protoporphyrin IX + Fe(2+). The protein operates within porphyrin-containing compound metabolism; protoheme biosynthesis; protoheme from protoporphyrin-IX: step 1/1. Functionally, catalyzes the ferrous insertion into protoporphyrin IX. This chain is Ferrochelatase, found in Methylobacillus flagellatus (strain ATCC 51484 / DSM 6875 / VKM B-1610 / KT).